Reading from the N-terminus, the 275-residue chain is MVRDDLRCRAGNETHWDPTAYMQFARLRQRPVVELLDHVDLYSPERIYDLGCGTGIATELLARRWPQAELHGVDSSAEMLEEAARLPIRASWERANLQHWCAERPASLLFAAAVLHFIERHCSLLPRLLGQLSPGGCLAAHMPNWRDASWYRLMLDALDSAGPGGTPLGSPTLRYLMQQRNVLSLDNYYRLLAPLCAEVDIWETEHLQVVDGNDPIFDWVKVSALRPVLGELDEEARRRFLDRYLDLLHRYYPQELDGRTLFPFRRVFVVASLRR.

This sequence belongs to the methyltransferase superfamily. Tam family.

The protein resides in the cytoplasm. It carries out the reaction trans-aconitate + S-adenosyl-L-methionine = (E)-3-(methoxycarbonyl)pent-2-enedioate + S-adenosyl-L-homocysteine. In terms of biological role, catalyzes the S-adenosylmethionine monomethyl esterification of trans-aconitate. The polypeptide is Trans-aconitate 2-methyltransferase (Pseudomonas paraeruginosa (strain DSM 24068 / PA7) (Pseudomonas aeruginosa (strain PA7))).